Here is a 439-residue protein sequence, read N- to C-terminus: Amino-acid acetyltransferase (439 aa).

One can recognise an N-acetyltransferase domain in the interval 289 to 429 (EDIRIATVQD…DHYNYQRRSK (141 aa)).

Belongs to the acetyltransferase family. ArgA subfamily.

The protein resides in the cytoplasm. The catalysed reaction is L-glutamate + acetyl-CoA = N-acetyl-L-glutamate + CoA + H(+). Its pathway is amino-acid biosynthesis; L-arginine biosynthesis; N(2)-acetyl-L-ornithine from L-glutamate: step 1/4. The chain is Amino-acid acetyltransferase from Mannheimia succiniciproducens (strain KCTC 0769BP / MBEL55E).